The primary structure comprises 279 residues: Diaminopimelate epimerase (279 aa).

3 residues coordinate substrate: N13, Q46, and N66. C75 acts as the Proton donor in catalysis. Substrate is bound by residues 76–77, N161, N194, and 212–213; these read GN and ER. Catalysis depends on C221, which acts as the Proton acceptor. Residue 222–223 coordinates substrate; that stretch reads GT.

The protein belongs to the diaminopimelate epimerase family. As to quaternary structure, homodimer.

It localises to the cytoplasm. It carries out the reaction (2S,6S)-2,6-diaminopimelate = meso-2,6-diaminopimelate. The protein operates within amino-acid biosynthesis; L-lysine biosynthesis via DAP pathway; DL-2,6-diaminopimelate from LL-2,6-diaminopimelate: step 1/1. Catalyzes the stereoinversion of LL-2,6-diaminopimelate (L,L-DAP) to meso-diaminopimelate (meso-DAP), a precursor of L-lysine and an essential component of the bacterial peptidoglycan. The chain is Diaminopimelate epimerase from Alkalilimnicola ehrlichii (strain ATCC BAA-1101 / DSM 17681 / MLHE-1).